The chain runs to 987 residues: Mitotic checkpoint serine/threonine-protein kinase bub-1 (987 aa).

Disordered regions lie at residues 278–385 (RRRH…TSKS) and 574–599 (LAANQAVQPSVTESSKPERSDPKDSS). The segment covering 350–364 (ERLKIMTAGRKDGNP) has biased composition (basic and acidic residues). Positions 368-380 (STSISSNYSTASA) are enriched in low complexity. Residues 575–587 (AANQAVQPSVTES) are compositionally biased toward polar residues. Basic and acidic residues predominate over residues 588 to 599 (SKPERSDPKDSS). Positions 690–987 (LHIQTLIGQG…EACDLAANQK (298 aa)) constitute a Protein kinase domain. ATP contacts are provided by residues 696–704 (IGQGGYAKV) and K718. The active-site Proton acceptor is the D814.

It belongs to the protein kinase superfamily. Ser/Thr protein kinase family. BUB1 subfamily. Interacts (via kinase domain) with mdf-1 (via coiled coil domain); the interaction recruits mdf-1 to unattached kinetochores during mitosis and between homologous chromosomes in early anaphase of meiosis I. May interact with bub-3; for localization at the kinetochore and the onset of anaphase.

Its subcellular location is the cytoplasm. It is found in the cell cortex. The protein resides in the nucleus. The protein localises to the chromosome. It localises to the centromere. Its subcellular location is the kinetochore. It carries out the reaction L-seryl-[protein] + ATP = O-phospho-L-seryl-[protein] + ADP + H(+). The catalysed reaction is L-threonyl-[protein] + ATP = O-phospho-L-threonyl-[protein] + ADP + H(+). In terms of biological role, serine/threonine-protein kinase essential for spindle-assembly checkpoint signaling. Plays a key role in the recruitment of the checkpoint proteins bub-3, mdf-1 and mdf-2 to unattached kinetochores. mdf-1 recruitment is independent of bub-1 kinase activity. Has a role in the correct kinetochore localization of the spindly-like protein spdl-1. In addition, during meiotic anaphase I, controls the recruitment of hcp-1/2 and klp-19 to the ring-shaped domain formed between chromosomes. Involved in chromosome alignment, chromosome homolog segregation and spindle assembly. In association with bub-3 at the kinetochore region of chromosomes, promotes the onset on anaphase independently from spindle checkpoint signaling and promotes the formation of stable end-on bipolar attachments of chromosomes. Plays a role in nuclear envelope breakdown. Required maternally during embryogenesis and in the zygote for the postembryonic development of several tissues including ventral cord neurons, gonad, intestine and seam cells. The polypeptide is Mitotic checkpoint serine/threonine-protein kinase bub-1 (Caenorhabditis elegans).